Consider the following 176-residue polypeptide: Ferritin, liver middle subunit (176 aa).

One can recognise a Ferritin-like diiron domain in the interval 7 to 156 (QNYHRDCEAA…DFITNLSRMD (150 aa)). Fe cation is bound by residues Glu-24, Glu-59, His-62, Glu-104, and Gln-138.

Belongs to the ferritin family. In terms of assembly, in liver, forms a heteromer consisting of middle and heavy subunits. The functional molecule forms a roughly spherical shell with a diameter of 12 nm and contains a central cavity into which the insoluble mineral iron core is deposited. Liver (at protein level).

The catalysed reaction is 4 Fe(2+) + O2 + 4 H(+) = 4 Fe(3+) + 2 H2O. In terms of biological role, stores iron in a soluble, non-toxic, readily available form. Important for iron homeostasis. Has ferroxidase activity. Iron is taken up in the ferrous form and deposited as ferric hydroxides after oxidation. The protein is Ferritin, liver middle subunit of Trematomus bernacchii (Emerald rockcod).